Reading from the N-terminus, the 323-residue chain is Serpentine receptor class gamma-5 (323 aa).

The next 7 membrane-spanning stretches (helical) occupy residues 31–51 (QLFY…IMLF), 63–83 (FIIF…DLFI), 98–117 (YPLF…IYNY), 151–171 (IPVT…NVII), 193–213 (WASL…ITVF), 245–265 (AAFF…ITAA), and 272–292 (FLQG…MVLI).

It belongs to the nematode receptor-like protein srg family.

Its subcellular location is the membrane. This is Serpentine receptor class gamma-5 (srg-5) from Caenorhabditis elegans.